The chain runs to 158 residues: NAD(P)H-quinone oxidoreductase subunit J, chloroplastic (158 aa).

It belongs to the complex I 30 kDa subunit family. As to quaternary structure, NDH is composed of at least 16 different subunits, 5 of which are encoded in the nucleus.

The protein localises to the plastid. It localises to the chloroplast thylakoid membrane. It carries out the reaction a plastoquinone + NADH + (n+1) H(+)(in) = a plastoquinol + NAD(+) + n H(+)(out). The catalysed reaction is a plastoquinone + NADPH + (n+1) H(+)(in) = a plastoquinol + NADP(+) + n H(+)(out). Functionally, NDH shuttles electrons from NAD(P)H:plastoquinone, via FMN and iron-sulfur (Fe-S) centers, to quinones in the photosynthetic chain and possibly in a chloroplast respiratory chain. The immediate electron acceptor for the enzyme in this species is believed to be plastoquinone. Couples the redox reaction to proton translocation, and thus conserves the redox energy in a proton gradient. This Acorus calamus var. americanus (American sweet flag) protein is NAD(P)H-quinone oxidoreductase subunit J, chloroplastic.